Here is a 999-residue protein sequence, read N- to C-terminus: Sarcoplasmic/endoplasmic reticulum calcium ATPase 3 (999 aa).

M1 is modified (N-acetylmethionine). The Cytoplasmic portion of the chain corresponds to 1 to 48 (MEAAHLLPAADVLRHFSVTAEGGLSPAQVTGARERYGPNELPSEEGKS). The residue at position 17 (S17) is a Phosphoserine. A Phosphothreonine modification is found at T19. Position 25 is a phosphoserine (S25). A helical transmembrane segment spans residues 49–69 (LWELVLEQFEDLLVRILLLAA). Residues 70 to 89 (LVSFVLAWFEEGEETTTAFV) are Lumenal-facing. Residues 90–110 (EPLVIMLILVANAIVGVWQER) form a helical membrane-spanning segment. Over 111-253 (NAESAIEALK…PERTPLQRKL (143 aa)) the chain is Cytoplasmic. Residues 254–273 (DEFGRQLSHAISVICVAVWV) traverse the membrane as a helical segment. Residues 274–295 (INIGHFADPAHGGSWLRGAVYY) are Lumenal-facing. The chain crosses the membrane as a helical span at residues 296–313 (FKIAVALAVAAIPEGLPA). Ca(2+) is bound by residues V304, A305, I307, and E309. The Cytoplasmic portion of the chain corresponds to 314 to 757 (VITTCLALGT…EEGRAIYSNM (444 aa)). Residue D351 is the 4-aspartylphosphate intermediate of the active site. Mg(2+)-binding residues include D351 and T353. T353 contributes to the ATP binding site. Residues 370–400 (AEADAGSCLLHEFTISGTTYTPEGEVRQGDQ) form an interaction with phospholamban 1 region. T415 is modified (phosphothreonine). Positions 442, 489, 515, 560, 625, 626, and 627 each coordinate ATP. The residue at position 662 (S662) is a Phosphoserine. Residues R678 and K684 each contribute to the ATP site. D703 provides a ligand contact to Mg(2+). N706 contributes to the ATP binding site. Residues 758–777 (KQFIRYLISSNVGEVVCIFL) traverse the membrane as a helical segment. Residues N768 and E771 each coordinate Ca(2+). The Lumenal segment spans residues 778 to 787 (TAILGLPEAL). Residues 788 to 808 (IPVQLLWVNLVTDGLPATALG) traverse the membrane as a helical segment. The interval 788 to 808 (IPVQLLWVNLVTDGLPATALG) is interaction with phospholamban 2. Ca(2+) contacts are provided by N796, T799, and D800. Topologically, residues 809–828 (FNPPDLDIMEKLPRSPREAL) are cytoplasmic. Residues 829-851 (ISGWLFFRYLAIGVYVGLATVAA) traverse the membrane as a helical segment. Residues 852–897 (ATWWFVYDAEGPHINFYQLRNFLKCSEDNPLFAGIDCEVFESRFPT) lie on the Lumenal side of the membrane. A helical transmembrane segment spans residues 898–917 (TMALSVLVTIEMCNALNSVS). E908 contacts Ca(2+). The Cytoplasmic portion of the chain corresponds to 918 to 930 (ENQSLLRMPPWMN). The chain crosses the membrane as a helical span at residues 931-949 (PWLLVAVAMSMALHFLILL). The Lumenal segment spans residues 950-964 (VPPLPLIFQVTPLSG). The chain crosses the membrane as a helical span at residues 965–985 (RQWVVVLQISLPVILLDEALK). At 986 to 999 (YLSRNHMHEEMSQK) the chain is on the cytoplasmic side.

The protein belongs to the cation transport ATPase (P-type) (TC 3.A.3) family. Type IIA subfamily. Interacts with sarcolipin (SLN). Interacts with phospholamban (PLN). Interacts with myoregulin (MRLN). Interacts with DWORF. Interacts with VMP1. Interacts with TUNAR; the interaction occurs at low levels in low glucose conditions and is increased by high glucose levels. Requires Mg(2+) as cofactor. As to expression, found in most tissues. Most abundant in thymus, trachea, salivary gland, spleen, bone marrow, lymph node, peripheral leukocytes, pancreas and colon. Also detected in fetal tissues. Expressed in cell lineages of hematopoietic, epithelial, or embryonic origin and also expressed in several cancer cell lines.

The protein localises to the nucleus membrane. It localises to the endoplasmic reticulum membrane. It is found in the sarcoplasmic reticulum membrane. It carries out the reaction Ca(2+)(in) + ATP + H2O = Ca(2+)(out) + ADP + phosphate + H(+). Inhibited by sarcolipin (SLN), phospholamban (PLN) and myoregulin (MRLN). Enhanced by DWORF; DWORF increases activity by displacing sarcolipin (SLN), phospholamban (PLN) and myoregulin (MRLN). Functionally, this magnesium-dependent enzyme catalyzes the hydrolysis of ATP coupled with the transport of calcium. Transports calcium ions from the cytosol into the sarcoplasmic/endoplasmic reticulum lumen. Contributes to calcium sequestration involved in muscular excitation/contraction. The sequence is that of Sarcoplasmic/endoplasmic reticulum calcium ATPase 3 from Homo sapiens (Human).